We begin with the raw amino-acid sequence, 240 residues long: Uridylate kinase (240 aa).

12–15 (KISG) lines the ATP pocket. Residues 20–25 (GNQGFG) form an involved in allosteric activation by GTP region. Residue G54 participates in UMP binding. G55 and R59 together coordinate ATP. UMP-binding positions include D74 and 135-142 (TGNPYFST). ATP contacts are provided by Y168 and D171.

This sequence belongs to the UMP kinase family. Homohexamer.

The protein resides in the cytoplasm. It carries out the reaction UMP + ATP = UDP + ADP. Its pathway is pyrimidine metabolism; CTP biosynthesis via de novo pathway; UDP from UMP (UMPK route): step 1/1. Its activity is regulated as follows. Allosterically activated by GTP. Inhibited by UTP. Catalyzes the reversible phosphorylation of UMP to UDP. This is Uridylate kinase from Moorella thermoacetica (strain ATCC 39073 / JCM 9320).